We begin with the raw amino-acid sequence, 333 residues long: Foldase protein PrsA (333 aa).

The signal sequence occupies residues Met1 to Ala22. The N-palmitoyl cysteine moiety is linked to residue Cys23. Cys23 is lipidated: S-diacylglycerol cysteine. Residues Thr145 to Lys240 enclose the PpiC domain. The disordered stretch occupies residues Asp301–Lys333. A compositionally biased stretch (basic and acidic residues) spans Ser312–Lys322. Residues Asp323 to Lys333 show a composition bias toward low complexity.

Belongs to the PrsA family.

Its subcellular location is the cell membrane. It carries out the reaction [protein]-peptidylproline (omega=180) = [protein]-peptidylproline (omega=0). Its function is as follows. Plays a major role in protein secretion by helping the post-translocational extracellular folding of several secreted proteins. This chain is Foldase protein PrsA, found in Streptococcus equi subsp. equi (strain 4047).